Consider the following 263-residue polypeptide: 3'-5' ssDNA/RNA exonuclease TatD (263 aa).

A divalent metal cation-binding residues include glutamate 92, histidine 128, and histidine 153.

The protein belongs to the metallo-dependent hydrolases superfamily. TatD-type hydrolase family. TatD subfamily. In terms of assembly, monomer. Mg(2+) is required as a cofactor.

The protein localises to the cytoplasm. Functionally, 3'-5' exonuclease that prefers single-stranded DNA and RNA. May play a role in the H(2)O(2)-induced DNA damage repair. The sequence is that of 3'-5' ssDNA/RNA exonuclease TatD from Rahnella sp. (strain Y9602).